A 388-amino-acid chain; its full sequence is DNA ADP-ribosyl transferase-DNA ADP-ribosyl glycohydrolase fusion protein (388 aa).

Residues R6–F197 enclose the DarT domain. NAD(+) contacts are provided by residues Y10–T12 and R50. The interval Q34–S52 is NAD(+)-binding element. Residue R50 is the Proton acceptor of the active site. The segment at T107 to E152 is ADP-ribosylating turn-turn loop. Residue E152 is part of the active site. The Macro domain maps to F196–P376. ADP-D-ribose contacts are provided by residues D215–M216, S227–N229, T301, G339–G343, and L371–E372.

It in the N-terminal section; belongs to the DarT ADP-ribosyltransferase family. This sequence in the C-terminal section; belongs to the DarG ADP-ribosyl glycohydrolase family.

It catalyses the reaction an N-(ADP-alpha-D-ribosyl)-thymidine in DNA + H2O = a thymidine in DNA + ADP-D-ribose. It carries out the reaction a thymidine in DNA + NAD(+) = an N-(ADP-alpha-D-ribosyl)-thymidine in DNA + nicotinamide + H(+). In terms of biological role, a fusion protein of the toxic and antitoxin components of a hybrid type II/IV toxin-antitoxin (TA) system. The N-terminal domain ADP-ribosylates ssDNA on a thymidine residue, while the C-terminal domain removes the modification, neutralizing the toxic effect. The sequence is that of DNA ADP-ribosyl transferase-DNA ADP-ribosyl glycohydrolase fusion protein from Thermosipho africanus (strain H17ap60334).